The sequence spans 403 residues: Formate-dependent phosphoribosylglycinamide formyltransferase (403 aa).

N(1)-(5-phospho-beta-D-ribosyl)glycinamide contacts are provided by residues 27-28 (EL) and Glu87. Residues Arg120, Lys161, 166–171 (SSGKGQ), 201–204 (EGFV), and Glu209 each bind ATP. Positions 125-319 (RLAAEELGLP…EFELHARAIL (195 aa)) constitute an ATP-grasp domain. Mg(2+) contacts are provided by Glu278 and Glu290. N(1)-(5-phospho-beta-D-ribosyl)glycinamide is bound by residues Asp297, Lys366, and 373–374 (RR). Residues 382–403 (GPDVETARSRAREAASRVEPVA) form a disordered region. Residues 386-397 (ETARSRAREAAS) show a composition bias toward basic and acidic residues.

It belongs to the PurK/PurT family. Homodimer.

It catalyses the reaction N(1)-(5-phospho-beta-D-ribosyl)glycinamide + formate + ATP = N(2)-formyl-N(1)-(5-phospho-beta-D-ribosyl)glycinamide + ADP + phosphate + H(+). The protein operates within purine metabolism; IMP biosynthesis via de novo pathway; N(2)-formyl-N(1)-(5-phospho-D-ribosyl)glycinamide from N(1)-(5-phospho-D-ribosyl)glycinamide (formate route): step 1/1. Its function is as follows. Involved in the de novo purine biosynthesis. Catalyzes the transfer of formate to 5-phospho-ribosyl-glycinamide (GAR), producing 5-phospho-ribosyl-N-formylglycinamide (FGAR). Formate is provided by PurU via hydrolysis of 10-formyl-tetrahydrofolate. The polypeptide is Formate-dependent phosphoribosylglycinamide formyltransferase (Rhodococcus jostii (strain RHA1)).